A 463-amino-acid chain; its full sequence is Glutamate--tRNA ligase 2 (463 aa).

Positions 11–21 match the 'HIGH' region motif; the sequence is PSPTGYLHIGG. The 'KMSKS' region signature appears at 240–244; it reads KLSKR. Residue lysine 243 coordinates ATP.

This sequence belongs to the class-I aminoacyl-tRNA synthetase family. Glutamate--tRNA ligase type 1 subfamily. Monomer.

The protein localises to the cytoplasm. It carries out the reaction tRNA(Glu) + L-glutamate + ATP = L-glutamyl-tRNA(Glu) + AMP + diphosphate. Its function is as follows. Catalyzes the attachment of glutamate to tRNA(Glu) in a two-step reaction: glutamate is first activated by ATP to form Glu-AMP and then transferred to the acceptor end of tRNA(Glu). This Campylobacter jejuni subsp. jejuni serotype O:2 (strain ATCC 700819 / NCTC 11168) protein is Glutamate--tRNA ligase 2.